The chain runs to 484 residues: MITRTKIICTIGPATNSPEMLAKLLDAGMNVARLNFSHGSHETHGQAIGFLKELREQKRVPLAIMLDTKGPEIRLGNIPQPISVSQGQKLRLVSSDIDGSAEGGVSLYPKGIFPFVPEGADVLIDDGYIHAVVVSSEADSLELEFMNSGLLKSHKSLSIRGVDVALPFMTEKDIADLKFGVEQNMDVVAASFVRYGEDIETMRKCLADLGNPKMPIIAKIENRLGVENFSKIAKLADGIMIARGDLGIELSVVEVPNLQKMMAKVSRETGHFCVTATQMLESMIRNVLPTRAEVSDIANAIYDGSSAVMLSGETASGAHPVAAVKIMRSVILETEKNLSHDSFLKLDDSNSALQVSPYLSAIGLAGIQIAERADAKALIVYTESGSSPMFLSKYRPKFPIIAVTPSTSVYYRLALEWGVYPMLTQESDRAVWRHQACIYGIEQGILSNYDRILVLSRGACMEETNNLTLTIVNDILTGSEFPET.

R33 lines the substrate pocket. Positions 35, 37, 67, and 68 each coordinate K(+). 35 to 38 contacts ATP; the sequence is NFSH. The ATP site is built by R74 and K155. A Mg(2+)-binding site is contributed by E221. Residues G244, D245, and T277 each coordinate substrate. D245 lines the Mg(2+) pocket.

It belongs to the pyruvate kinase family. In terms of assembly, homotetramer. Requires Mg(2+) as cofactor. The cofactor is K(+).

It carries out the reaction pyruvate + ATP = phosphoenolpyruvate + ADP + H(+). Its pathway is carbohydrate degradation; glycolysis; pyruvate from D-glyceraldehyde 3-phosphate: step 5/5. The chain is Pyruvate kinase (pyk) from Chlamydia pneumoniae (Chlamydophila pneumoniae).